A 752-amino-acid chain; its full sequence is Cation-transporting P-type ATPase B (752 aa).

The 64-residue stretch at 15–78 (RRIRLDVLGM…VVEKAGYHAA (64 aa)) folds into the HMA domain. Residues Cys-26 and Cys-29 each coordinate a metal cation. Helical transmembrane passes span 105–125 (LLVAAVLFVPLADLSTLFAIV), 132–152 (GWGYILTALAAPVVTWAAWPF), 167–187 (METLISVGIVAATAWSLSSVF), 201–221 (AILNSDSIYLEVAAGVTVFVL), 361–381 (IAGVFVPVVFVIAGLAGAAWL), and 390–410 (AFSVTLGVLVIACPCALGLAT). Asp-446 acts as the 4-aspartylphosphate intermediate in catalysis. Transmembrane regions (helical) follow at residues 491 to 511 (MAAAIVAASPDPGPVNGFVAV) and 714 to 734 (AIPIAAAGLLNPLIAGAAMAF).

It belongs to the cation transport ATPase (P-type) (TC 3.A.3) family. Type IB subfamily.

The protein resides in the cell membrane. It catalyses the reaction ATP + H2O = ADP + phosphate + H(+). The protein is Cation-transporting P-type ATPase B (ctpB) of Mycobacterium tuberculosis (strain ATCC 25618 / H37Rv).